The chain runs to 235 residues: 15,16-dihydrobiliverdin:ferredoxin oxidoreductase (235 aa).

This sequence belongs to the HY2 family.

It catalyses the reaction 15,16-dihydrobiliverdin + oxidized 2[4Fe-4S]-[ferredoxin] = biliverdin IXalpha + reduced 2[4Fe-4S]-[ferredoxin] + 2 H(+). Catalyzes the two-electron reduction of biliverdin IX-alpha at the C15 methine bridge. This Parasynechococcus marenigrum (strain WH8102) protein is 15,16-dihydrobiliverdin:ferredoxin oxidoreductase (pebA).